Consider the following 292-residue polypeptide: MKDIATPNRTKDIVEKYGFSFKKSLGQNFLIDTNVLNRIVDYAEIGPKGGAIEIGPGIGALTEQLAKRAKKVVAFEIDQRLLPILDETLAPYDNVTIINKDVLKANVHEVFQEQFEEGQDVMVVANLPYYVTTPILFKLLEEKLPVRGFVVMMQKEVGDRLAAKPGTKDYGSLSIAIQYYTEVETVMTVPRTVFVPQPNVDSSVIRLLKRPKPIVEVIDEKFFFEVVRASFAQRRKTLMNNLSNNLNDFPKDKELLERILTEIGIDPKRRGETLSIEEFAMLSNALVPHKMK.

S-adenosyl-L-methionine contacts are provided by N28, L30, G55, E76, D101, and N126.

The protein belongs to the class I-like SAM-binding methyltransferase superfamily. rRNA adenine N(6)-methyltransferase family. RsmA subfamily.

Its subcellular location is the cytoplasm. It carries out the reaction adenosine(1518)/adenosine(1519) in 16S rRNA + 4 S-adenosyl-L-methionine = N(6)-dimethyladenosine(1518)/N(6)-dimethyladenosine(1519) in 16S rRNA + 4 S-adenosyl-L-homocysteine + 4 H(+). In terms of biological role, specifically dimethylates two adjacent adenosines (A1518 and A1519) in the loop of a conserved hairpin near the 3'-end of 16S rRNA in the 30S particle. May play a critical role in biogenesis of 30S subunits. In Bacillus cytotoxicus (strain DSM 22905 / CIP 110041 / 391-98 / NVH 391-98), this protein is Ribosomal RNA small subunit methyltransferase A.